A 114-amino-acid polypeptide reads, in one-letter code: Tyrosine-protein phosphatase 27 (114 aa).

Positions 1–114 (WQMIVEHKCC…ELGNDNPIVV (114 aa)) constitute a Tyrosine-protein phosphatase domain. Aspartate 82 is a substrate binding site.

The protein belongs to the protein-tyrosine phosphatase family.

It carries out the reaction O-phospho-L-tyrosyl-[protein] + H2O = L-tyrosyl-[protein] + phosphate. The protein is Tyrosine-protein phosphatase 27 (STY-27) of Styela plicata (Wrinkled sea squirt).